Here is a 43-residue protein sequence, read N- to C-terminus: MTLRECCDWCAAKWNQAIEDGDKAAADAYQQLYALWERRFKEA.

This is an uncharacterized protein from Escherichia coli (Bacteriophage T3).